The primary structure comprises 180 residues: ATP-dependent protease subunit HslV (180 aa).

Threonine 9 is an active-site residue. 3 residues coordinate Na(+): alanine 164, cysteine 167, and threonine 170.

This sequence belongs to the peptidase T1B family. HslV subfamily. A double ring-shaped homohexamer of HslV is capped on each side by a ring-shaped HslU homohexamer. The assembly of the HslU/HslV complex is dependent on binding of ATP.

It localises to the cytoplasm. It carries out the reaction ATP-dependent cleavage of peptide bonds with broad specificity.. Allosterically activated by HslU binding. Its function is as follows. Protease subunit of a proteasome-like degradation complex believed to be a general protein degrading machinery. This chain is ATP-dependent protease subunit HslV, found in Leptospira borgpetersenii serovar Hardjo-bovis (strain JB197).